We begin with the raw amino-acid sequence, 206 residues long: Small ribosomal subunit protein uS4 (206 aa).

Residues 96-156 (TRLDNVVYRM…EKSRTQARIK (61 aa)) form the S4 RNA-binding domain.

The protein belongs to the universal ribosomal protein uS4 family. As to quaternary structure, part of the 30S ribosomal subunit. Contacts protein S5. The interaction surface between S4 and S5 is involved in control of translational fidelity.

Functionally, one of the primary rRNA binding proteins, it binds directly to 16S rRNA where it nucleates assembly of the body of the 30S subunit. With S5 and S12 plays an important role in translational accuracy. In Shewanella sp. (strain MR-4), this protein is Small ribosomal subunit protein uS4.